Consider the following 590-residue polypeptide: Conglutin beta 4 (590 aa).

A signal peptide spans 1–30 (MIKMRVRFPTLVLLLGIVFLMAVSIGIAYG). Residues 38-105 (HERPQEREQE…REPRREREQE (68 aa)) are compositionally biased toward basic and acidic residues. The tract at residues 38–175 (HERPQEREQE…DSRRQRNPYY (138 aa)) is disordered. Low complexity predominate over residues 137–146 (QGSSSSSRRQ). A Cupin type-1 1 domain is found at 174–332 (YYFSSERFQT…TFNTRYEEIQ (159 aa)). A glycan (N-linked (GlcNAc...) asparagine) is linked at Asn-239. 2 disordered regions span residues 340 to 362 (DEQE…GVIV) and 374 to 396 (KYAQ…LRSN). Positions 346 to 362 (EQRHGQEQSHQDEGVIV) are enriched in basic and acidic residues. Residues 391–548 (FNLRSNKPIY…TFPGSTEDVE (158 aa)) form the Cupin type-1 2 domain. Residue Asn-498 is glycosylated (N-linked (GlcNAc...) asparagine). The interval 559 to 579 (FANAQPQQQQQREREGRRGRR) is disordered.

Belongs to the 7S seed storage protein family. In terms of assembly, component of globulins complexes which accumulate in seeds.

Its function is as follows. Seed storage protein. Accumulates during seed development and is hydrolyzed after germination to provide a carbon and nitrogen source for the developing seedling. In Lupinus angustifolius (Narrow-leaved blue lupine), this protein is Conglutin beta 4.